Consider the following 1486-residue polypeptide: Chromosome partition protein MukB (1486 aa).

G34–S41 serves as a coordination point for ATP. Coiled-coil stretches lie at residues L326 to Q418, L444 to Q480, and R509 to V603. Residues P666 to R783 are flexible hinge. Coiled-coil stretches lie at residues E835–E923, E977–A1115, and V1209–S1266.

The protein belongs to the SMC family. MukB subfamily. In terms of assembly, homodimerization via its hinge domain. Binds to DNA via its C-terminal region. Interacts, and probably forms a ternary complex, with MukE and MukF via its C-terminal region. The complex formation is stimulated by calcium or magnesium. Interacts with tubulin-related protein FtsZ.

The protein localises to the cytoplasm. It localises to the nucleoid. Its function is as follows. Plays a central role in chromosome condensation, segregation and cell cycle progression. Functions as a homodimer, which is essential for chromosome partition. Involved in negative DNA supercoiling in vivo, and by this means organize and compact chromosomes. May achieve or facilitate chromosome segregation by condensation DNA from both sides of a centrally located replisome during cell division. In Escherichia fergusonii (strain ATCC 35469 / DSM 13698 / CCUG 18766 / IAM 14443 / JCM 21226 / LMG 7866 / NBRC 102419 / NCTC 12128 / CDC 0568-73), this protein is Chromosome partition protein MukB.